Reading from the N-terminus, the 22-residue chain is Caerin-3.1 (22 aa).

Lysine 22 is subject to Lysine amide.

This sequence belongs to the frog skin active peptide (FSAP) family. Caerin subfamily. As to expression, expressed by the skin dorsal glands.

It localises to the secreted. Antibacterial peptide with narrow spectrum of activity. Inhibits the formation of NO by neuronal nitric oxide synthase. The polypeptide is Caerin-3.1 (Litoria rothii (Roth's tree frog)).